The sequence spans 574 residues: Isocitrate dehydrogenase kinase/phosphatase (574 aa).

Residues 315–321 (APGIRGM) and lysine 336 each bind ATP. Residue aspartate 371 is part of the active site.

Belongs to the AceK family.

It localises to the cytoplasm. The enzyme catalyses L-seryl-[isocitrate dehydrogenase] + ATP = O-phospho-L-seryl-[isocitrate dehydrogenase] + ADP + H(+). In terms of biological role, bifunctional enzyme which can phosphorylate or dephosphorylate isocitrate dehydrogenase (IDH) on a specific serine residue. This is a regulatory mechanism which enables bacteria to bypass the Krebs cycle via the glyoxylate shunt in response to the source of carbon. When bacteria are grown on glucose, IDH is fully active and unphosphorylated, but when grown on acetate or ethanol, the activity of IDH declines drastically concomitant with its phosphorylation. The chain is Isocitrate dehydrogenase kinase/phosphatase from Escherichia coli O127:H6 (strain E2348/69 / EPEC).